The chain runs to 341 residues: Serpentine receptor class beta-1 (341 aa).

7 helical membrane-spanning segments follow: residues 22–42 (AQFW…IFLL), 66–86 (FLFA…PLFI), 102–122 (GQLS…GFSI), 141–161 (LGPL…FTVF), 188–208 (CWIL…ILLV), 240–260 (LIVS…TIFI), and 279–299 (GVYI…IKAL).

Belongs to the nematode receptor-like protein srb family.

The protein resides in the membrane. The polypeptide is Serpentine receptor class beta-1 (srb-1) (Caenorhabditis elegans).